A 522-amino-acid chain; its full sequence is Polyprenol-phosphate-mannose--protein mannosyltransferase (522 aa).

The Cytoplasmic segment spans residues 1 to 42; that stretch reads MTARPPESCVLAKDRPEEPVVPVVSPGPLVPVADFGPLDRLR. Residues 43 to 63 traverse the membrane as a helical segment; sequence GWIVTGLITLLATVTRFLNLG. The Extracellular segment spans residues 64–119; it reads SLTDAGTPIFDEKHYAPQAWQVLNNHGVEDNPGYGLVVHPPVGKQLIAIGEAIFGY. A helical transmembrane segment spans residues 120-140; it reads NGFGWRFTGALLGVVLVALVV. Over 141–149 the chain is Cytoplasmic; that stretch reads RIVRRISRS. Residues 150–170 traverse the membrane as a helical segment; it reads TLVGAIAGVLLICDGVSFVTA. Position 171 (R171) is a topological domain, extracellular. The chain crosses the membrane as a helical span at residues 172-192; it reads TALLDGFLTFFVVAAFGALIV. Residues 193-239 lie on the Cytoplasmic side of the membrane; it reads DRDQVRERMHIALLAGRSAATVWGPRVGVRWWRFGAGVLLGLACATK. The chain crosses the membrane as a helical span at residues 240–260; that stretch reads WSGVYFVLFFGAMALAFDVAA. Over 261 to 281 the chain is Extracellular; that stretch reads RRQYQVQRPWLGTVRRDVLPS. A helical transmembrane segment spans residues 282 to 302; it reads GYALGLIPFAVYLATYAPWFA. Topologically, residues 303–390 are cytoplasmic; sequence SETAIDRHAV…CGAQSCVKAE (88 aa). Residues 391-411 traverse the membrane as a helical segment; the sequence is MLVGTPAMWWLAVPVLAYAGW. At 412 to 418 the chain is on the extracellular side; the sequence is RMFVRRD. Residues 419–439 form a helical membrane-spanning segment; it reads WRYAVVLVGYCAGWLPWFADI. The Cytoplasmic portion of the chain corresponds to 440–442; that stretch reads DRQ. Residues 443-463 form a helical membrane-spanning segment; sequence MYFFYAATMAPFLVMGISLVL. Residues 464-478 are Extracellular-facing; that stretch reads GDILYHPGQGSERRT. The chain crosses the membrane as a helical span at residues 479–499; the sequence is LGLIVVCCYVALVVTNFAWLY. At 500–522 the chain is on the cytoplasmic side; that stretch reads PVLTGLPISQQTWNLEIWLPSWR.

The protein belongs to the glycosyltransferase 39 family.

The protein localises to the cell membrane. It functions in the pathway protein modification; protein glycosylation. Protein O-mannosyltransferase that catalyzes the transfer of a single mannose residue from a polyprenol phospho-mannosyl lipidic donor to the hydroxyl group of selected serine and threonine residues in acceptor proteins. The chain is Polyprenol-phosphate-mannose--protein mannosyltransferase (pmt) from Mycobacterium tuberculosis (strain CDC 1551 / Oshkosh).